We begin with the raw amino-acid sequence, 333 residues long: Ketol-acid reductoisomerase (NADP(+)) (333 aa).

A KARI N-terminal Rossmann domain is found at 2–182 (ANIYYDDSCD…GGGRAGILET (181 aa)). Residues 25-28 (YGSQ), arginine 48, serine 51, serine 53, and 83-86 (DTIQ) contribute to the NADP(+) site. Histidine 108 is an active-site residue. Glycine 134 is a binding site for NADP(+). The region spanning 183–331 (SFREETETDL…TKLRSMMKWL (149 aa)) is the KARI C-terminal knotted domain. Mg(2+) is bound by residues aspartate 191, glutamate 195, glutamate 227, and glutamate 231. Serine 252 provides a ligand contact to substrate.

Belongs to the ketol-acid reductoisomerase family. The cofactor is Mg(2+).

The enzyme catalyses (2R)-2,3-dihydroxy-3-methylbutanoate + NADP(+) = (2S)-2-acetolactate + NADPH + H(+). It carries out the reaction (2R,3R)-2,3-dihydroxy-3-methylpentanoate + NADP(+) = (S)-2-ethyl-2-hydroxy-3-oxobutanoate + NADPH + H(+). It participates in amino-acid biosynthesis; L-isoleucine biosynthesis; L-isoleucine from 2-oxobutanoate: step 2/4. The protein operates within amino-acid biosynthesis; L-valine biosynthesis; L-valine from pyruvate: step 2/4. Functionally, involved in the biosynthesis of branched-chain amino acids (BCAA). Catalyzes an alkyl-migration followed by a ketol-acid reduction of (S)-2-acetolactate (S2AL) to yield (R)-2,3-dihydroxy-isovalerate. In the isomerase reaction, S2AL is rearranged via a Mg-dependent methyl migration to produce 3-hydroxy-3-methyl-2-ketobutyrate (HMKB). In the reductase reaction, this 2-ketoacid undergoes a metal-dependent reduction by NADPH to yield (R)-2,3-dihydroxy-isovalerate. The polypeptide is Ketol-acid reductoisomerase (NADP(+)) (Leptospira biflexa serovar Patoc (strain Patoc 1 / Ames)).